A 469-amino-acid polypeptide reads, in one-letter code: 3-isopropylmalate dehydratase large subunit (469 aa).

[4Fe-4S] cluster-binding residues include cysteine 350, cysteine 410, and cysteine 413.

It belongs to the aconitase/IPM isomerase family. LeuC type 1 subfamily. As to quaternary structure, heterodimer of LeuC and LeuD. [4Fe-4S] cluster is required as a cofactor.

The catalysed reaction is (2R,3S)-3-isopropylmalate = (2S)-2-isopropylmalate. The protein operates within amino-acid biosynthesis; L-leucine biosynthesis; L-leucine from 3-methyl-2-oxobutanoate: step 2/4. Functionally, catalyzes the isomerization between 2-isopropylmalate and 3-isopropylmalate, via the formation of 2-isopropylmaleate. This Rhizobium leguminosarum bv. trifolii (strain WSM2304) protein is 3-isopropylmalate dehydratase large subunit.